Here is a 63-residue protein sequence, read N- to C-terminus: Conotoxin Pn-B01411 (63 aa).

Positions methionine 1–alanine 22 are cleaved as a signal peptide. Positions arginine 23–proline 49 are excised as a propeptide. At isoleucine 62 the chain carries Isoleucine amide.

This sequence belongs to the conotoxin T superfamily. Post-translationally, contains 2 disulfide bonds that can be either 'C1-C3, C2-C4' or 'C1-C4, C2-C3', since these disulfide connectivities have been observed for conotoxins with cysteine framework V (for examples, see AC P0DQQ7 and AC P81755). In terms of tissue distribution, expressed by the venom duct.

It localises to the secreted. In Conus pennaceus (Feathered cone), this protein is Conotoxin Pn-B01411.